A 306-amino-acid chain; its full sequence is 2-dehydro-3-deoxy-D-gluconate/2-dehydro-3-deoxy-phosphogluconate aldolase (306 aa).

Substrate contacts are provided by residues 61-62 (TT), 148-150 (YNY), and 173-175 (KDT). Catalysis depends on Lys173, which acts as the Schiff-base intermediate with substrate.

The protein belongs to the DapA family. KDPG aldolase subfamily. As to quaternary structure, homotetramer; dimer of dimers.

It catalyses the reaction 2-dehydro-3-deoxy-6-phospho-D-gluconate = D-glyceraldehyde 3-phosphate + pyruvate. The enzyme catalyses 2-dehydro-3-deoxy-D-gluconate = D-glyceraldehyde + pyruvate. It functions in the pathway carbohydrate acid metabolism; 2-dehydro-3-deoxy-D-gluconate degradation; D-glyceraldehyde 3-phosphate and pyruvate from 2-dehydro-3-deoxy-D-gluconate: step 2/2. Involved in the degradation of glucose via the Entner-Doudoroff pathway. Catalyzes the reversible cleavage of 2-keto-3-deoxy-6-phosphogluconate (KDPG) and 2-keto-3-deoxygluconate (KDG) forming pyruvate and glyceraldehyde 3-phosphate or glyceraldehyde, respectively. It is not able to use 2-keto-3-deoxy-6-phosphogalactonate (KDPGal) and 2-keto-3-deoxygalactonate (KDGal) as substrate. This is 2-dehydro-3-deoxy-D-gluconate/2-dehydro-3-deoxy-phosphogluconate aldolase (kdgA) from Thermoproteus tenax.